The primary structure comprises 663 residues: Cytoplasmic dynein 1 intermediate chain (663 aa).

Basic and acidic residues predominate over residues 17-37 (LREEKDRRRREKEIKDMEEAA). Disordered regions lie at residues 17–52 (LREEKDRRRREKEIKDMEEAAGRIGGGAGIDKDQRK) and 75–107 (SVNSMTSDNSNTQTPDASLQATVNGQSGGKKQP). Low complexity predominate over residues 75-85 (SVNSMTSDNSN). Residues 86-99 (TQTPDASLQATVNG) show a composition bias toward polar residues. WD repeat units follow at residues 311 to 360 (SKNR…STPE), 364 to 404 (HCQS…RTPI), 413 to 454 (AHTH…QPQD), 463 to 503 (SKAI…SGVN), 508 to 553 (RHLG…PLYS), 556 to 596 (DNSD…EVPT), and 602 to 641 (AGAPALNRVSWTPSGLHVCIGDEAGKLYVYDVAENLAQPS).

The protein belongs to the dynein intermediate chain family. In terms of assembly, homodimer. The cytoplasmic dynein 1 complex consists of two catalytic heavy chains (HCs) and a number of non-catalytic subunits presented by intermediate chains (ICs), light intermediate chains (LICs) and light chains (LCs). In terms of tissue distribution, high levels of isoform 1b, isoform 1c, isoform 3a and isoform 4 accumulate in early egg chambers and at stage 9 become concentrated at the posterior of the oocyte. Isoform 5a and isoform 5b are highly expressed in adult head and to a lesser extent in adult torso. Isoform 1a, isoform 2a and isoform 2b are found in all tissues examined, including ovaries, midgut, torso and head.

The protein localises to the cytoplasm. It is found in the cytoskeleton. The protein resides in the lysosome membrane. It localises to the nucleus membrane. In terms of biological role, acts as one of several non-catalytic accessory components of the cytoplasmic dynein 1 complex that are thought to be involved in linking dynein to cargos and to adapter proteins that regulate dynein function. Cytoplasmic dynein 1 acts as a motor for the intracellular retrograde motility of vesicles and organelles along microtubules. The intermediate chains mediate the help dynein bind to dynactin 150 kDa component. The polypeptide is Cytoplasmic dynein 1 intermediate chain (sw) (Drosophila melanogaster (Fruit fly)).